The chain runs to 70 residues: Myotoxin (70 aa).

The N-terminal stretch at 1 to 22 (MKILYLLFAFLFLAFLSEPGNA) is a signal peptide. 3 disulfide bridges follow: C26–C58, C33–C52, and C40–C59.

It belongs to the crotamine-myotoxin family. Monomer. Expressed by the venom gland.

It localises to the secreted. In terms of biological role, cationic peptide that possesses multiple functions. It acts as a cell-penetrating peptide (CPP), and as a potent voltage-gated potassium channel (Kv) inhibitor. It exhibits antimicrobial activities, hind limb paralysis, and severe muscle necrosis by a non-enzymatic mechanism. This Crotalus helleri (Southern pacific rattlesnake) protein is Myotoxin.